Consider the following 350-residue polypeptide: 3-methylornithine synthase (350 aa).

The Radical SAM core domain occupies 57 to 279; it reads NRVFLNCFIY…PKRLIPASLD (223 aa). [4Fe-4S] cluster contacts are provided by Cys-71 and Cys-75. Phe-77 provides a ligand contact to S-adenosyl-L-methionine. Residue Cys-78 participates in [4Fe-4S] cluster binding. (3R)-3-methyl-D-ornithine-binding residues include Asp-112, Ser-146, and Tyr-169. Residues Glu-171, Arg-182, and Arg-190 each contribute to the S-adenosyl-L-methionine site. Arg-235 contributes to the (3R)-3-methyl-D-ornithine binding site. Positions 240 and 242 each coordinate S-adenosyl-L-methionine. (3R)-3-methyl-D-ornithine is bound by residues Ser-277, Thr-298, and Ser-299.

It belongs to the radical SAM superfamily. PylB family. [4Fe-4S] cluster is required as a cofactor. S-adenosyl-L-methionine serves as cofactor.

The enzyme catalyses L-lysine = (3R)-3-methyl-D-ornithine. It participates in amino-acid biosynthesis; L-pyrrolysine biosynthesis. In terms of biological role, catalyzes the isomerization of L-lysine to (3R)-3-methyl-D-ornithine via a radical-based mechanism, a step in the biosynthesis pathway of pyrrolysine. Also catalyzes the reverse reaction in vitro, converting (3R)-3-methyl-D-ornithine into L-lysine. In Methanosarcina barkeri (strain Fusaro / DSM 804), this protein is 3-methylornithine synthase.